We begin with the raw amino-acid sequence, 121 residues long: Protein yippee (121 aa).

Residues 13–110 form the Yippee domain; the sequence is KLFNCAQCHT…LEYALITEAE (98 aa). Cysteine 17, cysteine 20, cysteine 73, and cysteine 76 together coordinate Zn(2+).

This sequence belongs to the yippee family. As to quaternary structure, interacts with hemolin.

This chain is Protein yippee, found in Drosophila melanogaster (Fruit fly).